The chain runs to 1242 residues: DNA-directed RNA polymerase RPB2 homolog (1242 aa).

A C4-type zinc finger spans residues 1180–1201 (CRNCGEPAIYNASHPIYKCMNC).

This sequence belongs to the RNA polymerase beta chain family. In terms of assembly, part of the viral DNA-directed RNA polymerase that consists of 8 polII-like subunits (RPB1, RPB2, RPB3, RPB5, RPB6, RPB7, RPB9, RPB10), a capping enzyme and a termination factor.

The protein localises to the host cytoplasm. It is found in the virion. The enzyme catalyses RNA(n) + a ribonucleoside 5'-triphosphate = RNA(n+1) + diphosphate. Functionally, catalytic component of the DNA-directed RNA polymerase (RNAP) that catalyzes the transcription in the cytoplasm of viral DNA into RNA using the four ribonucleoside triphosphates as substrates. Forms the polymerase active center together with RPB1. Part of the core element with the central large cleft, the clamp element that moves to open and close the cleft and the jaws that are thought to grab the incoming DNA template. This is DNA-directed RNA polymerase RPB2 homolog from African swine fever virus (isolate Tick/Malawi/Lil 20-1/1983) (ASFV).